We begin with the raw amino-acid sequence, 204 residues long: CASP-like protein 3A1 (204 aa).

Residues 1–39 (MGSIGNGRNGSEVGIQIPAMGNKEVLERPAIPRWPRLGV) lie on the Cytoplasmic side of the membrane. Residues 40–60 (VMVATRAVALVMAVLSMALMI) form a helical membrane-spanning segment. The Extracellular segment spans residues 61–88 (SAKQRGSLKIFGIEIPLYANWSFSDSLE). Residue asparagine 80 is glycosylated (N-linked (GlcNAc...) asparagine). The chain crosses the membrane as a helical span at residues 89 to 109 (YLVGMSAVSAAYCLAQLLLTA). At 110–124 (HKAVKNAPVVQSRNY) the chain is on the cytoplasmic side. The helical transmembrane segment at 125 to 145 (AWLLFTGDQIFAYAMMSAGSA) threads the bilayer. Topologically, residues 146 to 179 (AAAVANLNRTGIRHTALPNFCKPLPRFCDLSAAS) are extracellular. A glycan (N-linked (GlcNAc...) asparagine) is linked at asparagine 153. A helical membrane pass occupies residues 180-200 (IACAFLSCIFLAASAVIDVIW). Topologically, residues 201–204 (LSNM) are cytoplasmic.

This sequence belongs to the Casparian strip membrane proteins (CASP) family. In terms of assembly, homodimer and heterodimers.

It is found in the cell membrane. The sequence is that of CASP-like protein 3A1 from Oryza sativa subsp. indica (Rice).